We begin with the raw amino-acid sequence, 228 residues long: Archaeal flagellar ATP-binding protein FlaH (228 aa).

7 residues coordinate ATP: Gly30, Thr31, Lys33, Ser34, Val35, Glu57, and Lys191. Residue Ser34 participates in Mg(2+) binding. Glu57 contacts Mg(2+).

The protein belongs to the FlaH family. As to quaternary structure, the S.acidocaldarius archaellum assembly machinery and its filament consist of seven proteins (FlaB, FlaF, FlaG, FlaH, FlaI, FlaJ and FlaX). Interacts directly with the FlaX ring and the motor ATPase FlaI. Monomers, which can probably form homohexamers upon binding to ATP. In vitro, FlaH assembles as a second ring inside the FlaX ring.

Its subcellular location is the archaeal flagellum. The protein localises to the cytoplasm. Its function is as follows. Component of the archaellum. FlaX, FlaH and FlaI form the core cytoplasmic motor complex of the crenarchaeal archaellum. FlaH binds ATP with high affinity but lacks detectable in vitro ATPase activity. ATP binding is essential for interaction with FlaI and for archaellum assembly. The chain is Archaeal flagellar ATP-binding protein FlaH from Sulfolobus acidocaldarius (strain ATCC 33909 / DSM 639 / JCM 8929 / NBRC 15157 / NCIMB 11770).